Reading from the N-terminus, the 1012-residue chain is Axonemal dynein light chain domain-containing protein 1 (1012 aa).

A compositionally biased stretch (low complexity) spans M1 to S17. Residues M1–L34 form a disordered region. Coiled-coil stretches lie at residues Q317–S402, E447–D486, and S572–G597. The span at P841–S854 shows a compositional bias: acidic residues. Disordered stretches follow at residues P841 to E879 and L963 to H1012. Composition is skewed to basic and acidic residues over residues K855–E879 and L963–K987. The span at E988–E997 shows a compositional bias: acidic residues.

As to expression, highly expressed in testis. Highly expressed in the round and late spermatids.

The protein resides in the cytoplasm. May be essential for spermiogenesis and male fertility probably by regulating the manchette dynamics, spermatid head shaping and sperm flagellum assembly. This chain is Axonemal dynein light chain domain-containing protein 1, found in Homo sapiens (Human).